Consider the following 321-residue polypeptide: Mas-related G-protein coupled receptor member D (321 aa).

Topologically, residues Met1 to Leu33 are extracellular. Asn2, Asn6, and Asn16 each carry an N-linked (GlcNAc...) asparagine glycan. The chain crosses the membrane as a helical span at residues Ala34–Phe54. Residues Arg55 to Asn59 lie on the Cytoplasmic side of the membrane. Residues Pro60–Ala80 form a helical membrane-spanning segment. At Ser81–Gly112 the chain is on the extracellular side. Residue Asn92 is glycosylated (N-linked (GlcNAc...) asparagine). A helical membrane pass occupies residues Leu113–Phe133. Topologically, residues Lys134–Ser142 are cytoplasmic. A helical transmembrane segment spans residues Ala143–Phe163. Topologically, residues Cys164 to Ala184 are extracellular. Residues Leu185–Val205 form a helical membrane-spanning segment. The Cytoplasmic segment spans residues Arg206–Arg218. The helical transmembrane segment at Leu219–Ile239 threads the bilayer. Residues Tyr240–Cys257 lie on the Extracellular side of the membrane. Residues Phe258 to Gly280 form a helical membrane-spanning segment. Over Ser281 to Ala321 the chain is Cytoplasmic. The tract at residues Glu302 to Ala321 is disordered.

It belongs to the G-protein coupled receptor 1 family. Mas subfamily.

The protein localises to the cell membrane. In terms of biological role, may regulate nociceptor function and/or development, including the sensation or modulation of pain. Functions as a specific membrane receptor for beta-alanine. Beta-alanine at micromolar doses specifically evoked Ca(2+) influx in cells expressing the receptor. Beta-alanine decreases forskolin-stimulated cAMP production in cells expressing the receptor, suggesting that the receptor couples with G-protein G(q) and G(i). The chain is Mas-related G-protein coupled receptor member D (MRGPRD) from Homo sapiens (Human).